Reading from the N-terminus, the 453-residue chain is Lysine histidine transporter-like 1 (453 aa).

Residues 1 to 44 (MYIQMTDGVPPPPEQSSLDHRIDELERQKEIDDWLPITSSRNAK) are Cytoplasmic-facing. A run of 2 helical transmembrane segments spans residues 45–65 (WWYS…LGLP) and 66–86 (FFMA…SWII). At 87 to 122 (TLYTLWQMVEMHEMVPGKRFDRYHELGQFAFGERLG) the chain is on the cytoplasmic side. The helical transmembrane segment at 123–143 (LYIIVPQQIIVEVGVCIVYMV) threads the bilayer. Residues 144-164 (TGGQSLKKFHEIACQDCSPIR) lie on the Extracellular side of the membrane. Residues 165 to 185 (LSFFIMIFASSHFVLSHLPNF) traverse the membrane as a helical segment. Over 186–187 (NS) the chain is Cytoplasmic. The chain crosses the membrane as a helical span at residues 188–208 (ISGVSLVAAVMSLSYSTIAWT). Residues 209-231 (ATAAKGVQEDVQYGYKSGTTAST) are Extracellular-facing. Residues 232 to 252 (VLSFFTGLGGIAFAYAGHNVV) form a helical membrane-spanning segment. The Cytoplasmic portion of the chain corresponds to 253–276 (LEIQATIPSTPSNPSKGPMWRGVV). A helical membrane pass occupies residues 277-297 (VAYVVVALCYFPVALVGYGVF). The Extracellular portion of the chain corresponds to 298–318 (GNAVLDNVLMSLETPVWAIAT). The helical transmembrane segment at 319 to 339 (ANLFVVMHVIGSYQIFAMPVF) threads the bilayer. Residues 340 to 359 (DMVETFLVKKLNFKPSTVLR) lie on the Cytoplasmic side of the membrane. A helical transmembrane segment spans residues 360–382 (FIVRNVYVALTMFIGIMIPFFGG). Topologically, residues 383–385 (LLA) are extracellular. The helical transmembrane segment at 386–408 (FFGGFAFAPTSYFLPCIMWLLIY) threads the bilayer. At 409-412 (KPKR) the chain is on the cytoplasmic side. The helical transmembrane segment at 413–433 (FSLSWWTNWVCIVLGVVLMIL) threads the bilayer. Residues 434 to 453 (SSIGGLRQIIIQSKDYSFFS) are Extracellular-facing.

It belongs to the amino acid/polyamine transporter 2 family. Amino acid/auxin permease (AAAP) (TC 2.A.18.2) subfamily.

It is found in the cell membrane. In terms of biological role, amino acid transporter. This is Lysine histidine transporter-like 1 from Arabidopsis thaliana (Mouse-ear cress).